The sequence spans 502 residues: Cytochrome P450 monooxygenase orf6 (502 aa).

A helical membrane pass occupies residues 3–25; it reads ALWVLAVALVAYFLCLSIYRLFL. Asn382 carries an N-linked (GlcNAc...) asparagine glycan. Cys445 is a heme binding site.

This sequence belongs to the cytochrome P450 family. Heme is required as a cofactor.

The protein resides in the membrane. It functions in the pathway mycotoxin biosynthesis. Cytochrome P450 monooxygenase; part of the gene cluster that mediates the biosynthesis of brefeldin A (BFA), a protein transport inhibitor that shows antiviral, antifungal, and antitumor properties. The proposed biosynthesis of BFA involves formation of an acyclic polyketide chain that is differentially tailored throughout the backbone. The highly reducing polyketide synthase Bref-PKS is proposed to synthesize the precisely reduced octaketide precursor, which could then be directly offloaded by the thiohydrolase enzyme Bref-TH followed by a cytochrome P450 monooxygenase-mediated formation of the cyclopentane ring and macrocyclization to afford 7-deoxy BFA. Alternatively, the first ring annulation can also occur on the ACP-tethered intermediate before the thiohydrolase release and lactonization. The C7-hydroxylation by another cytochrome P450 monooxygenase is believed to be the final step in the process to obtain the final structure of BFA. In addition to the HRPKS Bref-PKS and the thiohydrolase Bref-TH, the brefeldin A biosynthesis cluster contains 4 cytochrome p450 monooxygenases (called orf3 to orf6), as well a the probable cluster-specific transcription regulator orf8. The protein is Cytochrome P450 monooxygenase orf6 of Eupenicillium brefeldianum (Penicillium brefeldianum).